The primary structure comprises 577 residues: Urease subunit alpha (577 aa).

The Urease domain maps to 136 to 577 (GGIDCHVHFI…LPMAQRYFLF (442 aa)). Histidine 141, histidine 143, and lysine 224 together coordinate Ni(2+). At lysine 224 the chain carries N6-carboxylysine. Histidine 226 lines the substrate pocket. The Ni(2+) site is built by histidine 253 and histidine 279. Histidine 327 (proton donor) is an active-site residue. Aspartate 367 serves as a coordination point for Ni(2+).

Belongs to the metallo-dependent hydrolases superfamily. Urease alpha subunit family. In terms of assembly, heterotrimer of UreA (gamma), UreB (beta) and UreC (alpha) subunits. Three heterotrimers associate to form the active enzyme. Ni cation serves as cofactor. Post-translationally, carboxylation allows a single lysine to coordinate two nickel ions.

The protein resides in the cytoplasm. The catalysed reaction is urea + 2 H2O + H(+) = hydrogencarbonate + 2 NH4(+). The protein operates within nitrogen metabolism; urea degradation; CO(2) and NH(3) from urea (urease route): step 1/1. This is Urease subunit alpha from Mycobacteroides abscessus (strain ATCC 19977 / DSM 44196 / CCUG 20993 / CIP 104536 / JCM 13569 / NCTC 13031 / TMC 1543 / L948) (Mycobacterium abscessus).